A 943-amino-acid polypeptide reads, in one-letter code: Translation initiation factor IF-2 (943 aa).

Residues 99–113 show a composition bias toward low complexity; the sequence is VKAAQTQAAPVQPEQ. Positions 99-354 are disordered; it reads VKAAQTQAAP…LEPNQHAFQA (256 aa). The span at 117 to 141 shows a compositional bias: basic and acidic residues; sequence DAVKARAEAAARAEARAKAEAEAAK. A compositionally biased stretch (low complexity) spans 145 to 172; it reads AKAGNKAKPAAQKPTEAKAETAPVAAET. Over residues 173 to 197 the composition is skewed to basic and acidic residues; that stretch reads KPAEPKEKAVKPKHERNGKGKDAKK. The span at 200 to 215 shows a compositional bias: low complexity; sequence KPAAPAVPQPVVSAEE. The span at 216–250 shows a compositional bias: basic and acidic residues; sequence QAQRDEEARRAAALRAHQEALLKEKQERQARREAM. Over residues 251-264 the composition is skewed to low complexity; it reads KQQAEQQAKAAQEA. Basic and acidic residues-rich tracts occupy residues 295-308 and 319-335; these read AKKE…DEGQ and GGRD…ERVR. The region spanning 443–612 is the tr-type G domain; sequence PRPPVVTVMG…LLEAEVLELT (170 aa). The segment at 452–459 is G1; the sequence is GHVDHGKT. GTP is bound at residue 452–459; that stretch reads GHVDHGKT. The G2 stretch occupies residues 477–481; sequence GITQH. The G3 stretch occupies residues 498 to 501; it reads DTPG. GTP-binding positions include 498–502 and 552–555; these read DTPGH and NKID. The segment at 552-555 is G4; it reads NKID. The G5 stretch occupies residues 588-590; that stretch reads SAK.

Belongs to the TRAFAC class translation factor GTPase superfamily. Classic translation factor GTPase family. IF-2 subfamily.

It localises to the cytoplasm. Its function is as follows. One of the essential components for the initiation of protein synthesis. Protects formylmethionyl-tRNA from spontaneous hydrolysis and promotes its binding to the 30S ribosomal subunits. Also involved in the hydrolysis of GTP during the formation of the 70S ribosomal complex. The protein is Translation initiation factor IF-2 of Neisseria gonorrhoeae (strain NCCP11945).